Consider the following 304-residue polypeptide: 3-diazoavenalumate denitrifying reductase (304 aa).

It belongs to the NAD(P)-dependent epimerase/dehydratase family.

The enzyme catalyses 3-diazoavenalumate + NADPH + H(+) = avenalumate + N2 + NADP(+). It catalyses the reaction 3-diazoavenalumate + NADH + H(+) = avenalumate + N2 + NAD(+). The catalysed reaction is (E)-3-diazocoumarate + NADPH = N2 + (E)-4-coumarate + NADP(+). It carries out the reaction (E)-3-diazocoumarate + NADH = N2 + (E)-4-coumarate + NAD(+). Oxidoreductase involved in the biosynthesis of avenalumic acid (AVA). Catalyzes the denitrification of 3-diazoavenalumic acid (3-DAA) to produce AVA. It can also act on 3-diazocoumaric acid (3-DCA). Can use NADPH or NADH as a reductant, with a preference for NADPH. In Streptomyces sp, this protein is 3-diazoavenalumate denitrifying reductase.